A 491-amino-acid chain; its full sequence is Protein nucleotidyltransferase YdiU (491 aa).

Residues Gly-92, Gly-94, Arg-95, Lys-115, Asp-127, Gly-128, Arg-178, and Arg-185 each coordinate ATP. Asp-254 functions as the Proton acceptor in the catalytic mechanism. Residues Asn-255 and Asp-264 each coordinate Mg(2+). Asp-264 serves as a coordination point for ATP.

It belongs to the SELO family. Mg(2+) serves as cofactor. It depends on Mn(2+) as a cofactor.

It carries out the reaction L-seryl-[protein] + ATP = 3-O-(5'-adenylyl)-L-seryl-[protein] + diphosphate. The enzyme catalyses L-threonyl-[protein] + ATP = 3-O-(5'-adenylyl)-L-threonyl-[protein] + diphosphate. The catalysed reaction is L-tyrosyl-[protein] + ATP = O-(5'-adenylyl)-L-tyrosyl-[protein] + diphosphate. It catalyses the reaction L-histidyl-[protein] + UTP = N(tele)-(5'-uridylyl)-L-histidyl-[protein] + diphosphate. It carries out the reaction L-seryl-[protein] + UTP = O-(5'-uridylyl)-L-seryl-[protein] + diphosphate. The enzyme catalyses L-tyrosyl-[protein] + UTP = O-(5'-uridylyl)-L-tyrosyl-[protein] + diphosphate. Functionally, nucleotidyltransferase involved in the post-translational modification of proteins. It can catalyze the addition of adenosine monophosphate (AMP) or uridine monophosphate (UMP) to a protein, resulting in modifications known as AMPylation and UMPylation. This Pseudarthrobacter chlorophenolicus (strain ATCC 700700 / DSM 12829 / CIP 107037 / JCM 12360 / KCTC 9906 / NCIMB 13794 / A6) (Arthrobacter chlorophenolicus) protein is Protein nucleotidyltransferase YdiU.